A 75-amino-acid polypeptide reads, in one-letter code: Neuropeptide-like protein 31 (75 aa).

A signal peptide spans 1–22 (MISTSSILVLVVLLACFMAANA). Tyrosine amide occurs at positions 29, 39, 49, 56, and 64. Residue Trp-73 is modified to Tryptophan amide.

It belongs to the YARP (YGGW-amide related peptide) family. In terms of tissue distribution, expressed in hypoderm.

The protein resides in the secreted. In terms of biological role, antimicrobial peptides that have antifungal activity against D.coniospora. Has weak antibacterial activity against Gram-positive bacteria M.luteus and Gram-negative E.coli. The sequence is that of Neuropeptide-like protein 31 (nlp-31) from Caenorhabditis elegans.